The chain runs to 250 residues: MWQLLPPAALLLLVSADTQTADPSKAVVLLDPQWNHVLTNDRVTLKCQGDYPVEDNSTKWWHNGTLISSQTPSYFIADVKVQDSGEYKCQTGLSAPSDPVKLEVHVGWLLLQVAQRVVNVGKPIRLKCHSWKKTPVAKVQYFRNGRGKKYSHGNSDFHIPEAKLEHSGSYFCRGIIGSKNESSESVQITVQAPETLQTVSSFFLPWHQITFCLVMGVLFAVDTGLYFSVRRHLQSSEEWRDGKVTWSKGP.

The N-terminal stretch at 1–16 (MWQLLPPAALLLLVSA) is a signal peptide. At 17–208 (DTQTADPSKA…VSSFFLPWHQ (192 aa)) the chain is on the extracellular side. Ig-like C2-type domains are found at residues 23-105 (PSKA…LEVH) and 99-189 (PVKL…VQIT). Disulfide bonds link Cys47-Cys89 and Cys128-Cys172. N-linked (GlcNAc...) asparagine glycans are attached at residues Asn56 and Asn63. A glycan (N-linked (GlcNAc...) asparagine) is linked at Asn180. Residues 209 to 225 (ITFCLVMGVLFAVDTGL) traverse the membrane as a helical segment. At 226 to 250 (YFSVRRHLQSSEEWRDGKVTWSKGP) the chain is on the cytoplasmic side.

Forms a heterooligomeric complex with ITAM-containing signaling subunits FCER1G. Interacts (via transmembrane domain) with signaling subunits; this interaction is a prerequisite for receptor complex expression on the cell surface and intracellular signal transduction. Binds the Fc region of antigen-complexed IgG. As to expression, expressed in gamma-delta T cells.

The protein localises to the cell membrane. In terms of biological role, receptor for the invariable Fc fragment of immunoglobulin gamma (IgG). Optimally activated upon binding of clustered antigen-IgG complexes displayed on cell surfaces, triggers lysis of antibody-coated cells, a process known as antibody-dependent cellular cytotoxicity (ADCC). Does not bind free monomeric IgG, thus avoiding inappropriate effector cell activation in the absence of antigenic trigger. Mediates IgG effector functions on natural killer (NK) cells. Binds antigen-IgG complexes generated upon infection and triggers NK cell-dependent cytokine production and degranulation to limit viral load and propagation. Fc-binding subunit that associates with FCER1G adapters to form functional signaling complexes. Following the engagement of antigen-IgG complexes, triggers phosphorylation of immunoreceptor tyrosine-based activation motif (ITAM)-containing adapter with subsequent activation of phosphatidylinositol 3-kinase signaling and sustained elevation of intracellular calcium that ultimately drive NK cell activation. Mediates enhanced ADCC in response to afucosylated IgGs. This Bos taurus (Bovine) protein is Low affinity immunoglobulin gamma Fc region receptor III-A.